Here is a 458-residue protein sequence, read N- to C-terminus: Elongation factor 1-alpha (458 aa).

A N,N,N-trimethylglycine modification is found at glycine 2. N6,N6-dimethyllysine; alternate is present on lysine 3. N6-methyllysine; alternate is present on lysine 3. The 236-residue stretch at 5–240 (KTHVNVVVIG…DAIEPPVRPS (236 aa)) folds into the tr-type G domain. A G1 region spans residues 14-21 (GHVDSGKS). 14–21 (GHVDSGKS) serves as a coordination point for GTP. Position 30 is an N6-methyllysine (lysine 30). The tract at residues 70–74 (GITID) is G2. Lysine 79 carries the post-translational modification N6,N6,N6-trimethyllysine. The G3 stretch occupies residues 91–94 (DAPG). GTP contacts are provided by residues 91–95 (DAPGH) and 153–156 (NKMD). The segment at 153-156 (NKMD) is G4. The interval 192-194 (SGW) is G5. Lysine 316 carries the N6,N6-dimethyllysine; alternate modification. At lysine 316 the chain carries N6-methyllysine; alternate. Residue lysine 390 is modified to N6-methyllysine.

This sequence belongs to the TRAFAC class translation factor GTPase superfamily. Classic translation factor GTPase family. EF-Tu/EF-1A subfamily.

The protein resides in the cytoplasm. In terms of biological role, this protein promotes the GTP-dependent binding of aminoacyl-tRNA to the A-site of ribosomes during protein biosynthesis. This is Elongation factor 1-alpha (TEF-2) from Mucor circinelloides f. lusitanicus (Mucor racemosus var. lusitanicus).